The primary structure comprises 255 residues: 3-deoxy-manno-octulosonate cytidylyltransferase (255 aa).

The protein belongs to the KdsB family.

It is found in the cytoplasm. It carries out the reaction 3-deoxy-alpha-D-manno-oct-2-ulosonate + CTP = CMP-3-deoxy-beta-D-manno-octulosonate + diphosphate. Its pathway is nucleotide-sugar biosynthesis; CMP-3-deoxy-D-manno-octulosonate biosynthesis; CMP-3-deoxy-D-manno-octulosonate from 3-deoxy-D-manno-octulosonate and CTP: step 1/1. It functions in the pathway bacterial outer membrane biogenesis; lipopolysaccharide biosynthesis. Activates KDO (a required 8-carbon sugar) for incorporation into bacterial lipopolysaccharide in Gram-negative bacteria. This chain is 3-deoxy-manno-octulosonate cytidylyltransferase, found in Psychromonas ingrahamii (strain DSM 17664 / CCUG 51855 / 37).